Here is a 286-residue protein sequence, read N- to C-terminus: MNKSGIIILNKPKGLTTNHLIQKLKRKLNVKKIGHAGTLDPLATGVVICLINNGTKLSDYFLNENKAYEVTMKLFQATDTYDSDGSIIEEQEPFKIEQEQVEKVIAKFNGLAYEQEPPMYSAIKIDGKKLYEYARENQVVKVNKRLIKINSLSLDKYENNEISMTVYCSKGTYIRSLIVDIAKELNTIAHVTSLNRIESGNFIIKNSVNIENCEESNLIKMFDAIKMADYEIVELDDTLNVEHGKKIEVIAEKNIVFISNKSKELIACYERENGNVFKCKRGGLNI.

Asp40 (nucleophile) is an active-site residue.

It belongs to the pseudouridine synthase TruB family. Type 1 subfamily.

The catalysed reaction is uridine(55) in tRNA = pseudouridine(55) in tRNA. In terms of biological role, responsible for synthesis of pseudouridine from uracil-55 in the psi GC loop of transfer RNAs. This chain is tRNA pseudouridine synthase B, found in Mesoplasma florum (strain ATCC 33453 / NBRC 100688 / NCTC 11704 / L1) (Acholeplasma florum).